The sequence spans 405 residues: Indoleamine 2,3-dioxygenase 2 (405 aa).

His347 serves as a coordination point for heme.

Belongs to the indoleamine 2,3-dioxygenase family. Requires heme as cofactor. In terms of tissue distribution, expressed mainly in antigen-presenting immune cells, liver, kidney, brain, and placenta. Highly expressed in kidney, followed by epididymis and liver (at protein level). Detected in the tails of the spermatozoa in the testis and in the kidney tubules (at protein level). Constitutively expressed in brain.

It catalyses the reaction L-tryptophan + O2 = N-formyl-L-kynurenine. It participates in amino-acid degradation; L-tryptophan degradation via kynurenine pathway; L-kynurenine from L-tryptophan: step 1/2. With respect to regulation, activity is inhibited by D-1MT (1-methyl-D-tryptophan) and MTH-trp (methylthiohydantoin-DL-tryptophan) but not L-1MT (1-methyl-L-tryptophan). Its function is as follows. Catalyzes the first and rate-limiting step in the kynurenine pathway of tryptophan catabolism. Involved in immune regulation. The polypeptide is Indoleamine 2,3-dioxygenase 2 (Mus musculus (Mouse)).